We begin with the raw amino-acid sequence, 721 residues long: Polyribonucleotide nucleotidyltransferase (721 aa).

Mg(2+)-binding residues include Asp485 and Asp491. Positions 552–611 constitute a KH domain; that stretch reads PKIYIVKIHPDKIREIIGPGGKVIRELQAMSNTRIEVDDSGTVKIAASTEEEARIAIKAV. Residues 621 to 689 enclose the S1 motif domain; that stretch reads GEIYEGEVVR…PEGKIRLSRK (69 aa). Positions 687-721 are disordered; it reads SRKALLPAPEKGEEDEKSAPRSRRPGGNSDRRNNR.

It belongs to the polyribonucleotide nucleotidyltransferase family. It depends on Mg(2+) as a cofactor.

The protein resides in the cytoplasm. The catalysed reaction is RNA(n+1) + phosphate = RNA(n) + a ribonucleoside 5'-diphosphate. Its function is as follows. Involved in mRNA degradation. Catalyzes the phosphorolysis of single-stranded polyribonucleotides processively in the 3'- to 5'-direction. This is Polyribonucleotide nucleotidyltransferase from Desulfosudis oleivorans (strain DSM 6200 / JCM 39069 / Hxd3) (Desulfococcus oleovorans).